The following is a 379-amino-acid chain: Dual-specificity RNA methyltransferase RlmN (379 aa).

The active-site Proton acceptor is E97. Residues 103–343 enclose the Radical SAM core domain; sequence QGGRGTLCVS…VRTTRGDDID (241 aa). Cysteines 110 and 346 form a disulfide. 3 residues coordinate [4Fe-4S] cluster: C117, C121, and C124. S-adenosyl-L-methionine is bound by residues 171 to 172, S203, 225 to 227, and N303; these read GE and SLH. Catalysis depends on C346, which acts as the S-methylcysteine intermediate.

Belongs to the radical SAM superfamily. RlmN family. The cofactor is [4Fe-4S] cluster.

Its subcellular location is the cytoplasm. It catalyses the reaction adenosine(2503) in 23S rRNA + 2 reduced [2Fe-2S]-[ferredoxin] + 2 S-adenosyl-L-methionine = 2-methyladenosine(2503) in 23S rRNA + 5'-deoxyadenosine + L-methionine + 2 oxidized [2Fe-2S]-[ferredoxin] + S-adenosyl-L-homocysteine. The catalysed reaction is adenosine(37) in tRNA + 2 reduced [2Fe-2S]-[ferredoxin] + 2 S-adenosyl-L-methionine = 2-methyladenosine(37) in tRNA + 5'-deoxyadenosine + L-methionine + 2 oxidized [2Fe-2S]-[ferredoxin] + S-adenosyl-L-homocysteine. Specifically methylates position 2 of adenine 2503 in 23S rRNA and position 2 of adenine 37 in tRNAs. m2A2503 modification seems to play a crucial role in the proofreading step occurring at the peptidyl transferase center and thus would serve to optimize ribosomal fidelity. The polypeptide is Dual-specificity RNA methyltransferase RlmN (Pseudomonas aeruginosa (strain ATCC 15692 / DSM 22644 / CIP 104116 / JCM 14847 / LMG 12228 / 1C / PRS 101 / PAO1)).